The following is a 152-amino-acid chain: MYIGSDFMKDKYLMINTSVLPDVFEKVIEAKELMKAGKIKEITEAVKVVGISRSTYYKYKDYVFNVSELSSNQKVIISVTLNHRPGTLSKILDKIALYKGNILTINQEIPIHNTANVNITFDISQLNIEFNRLLEEISAMDNVIKLDLIAMD.

Residues 76–151 form the ACT domain; sequence IISVTLNHRP…NVIKLDLIAM (76 aa).

Belongs to the UPF0735 family.

The chain is UPF0735 ACT domain-containing protein CTC_00116 from Clostridium tetani (strain Massachusetts / E88).